The primary structure comprises 188 residues: PRA1 family protein 3 (188 aa).

Met1 carries the N-acetylmethionine modification. Over 1–35 (MDVNIAPLRAWDDFFPGSDRFAQPDFRDISKWNNR) the chain is Cytoplasmic. The next 2 helical transmembrane spans lie at 36 to 56 (VVSN…MMIS) and 57 to 77 (VVGF…VLVF). The Cytoplasmic portion of the chain corresponds to 78–93 (TGFVWAAHNKDALRRL). 2 helical membrane passes run 94 to 114 (KKRY…FLIS) and 115 to 135 (MFGG…LMFI). A required for homodimer formation and heterodimer formation with ARL6IP1 region spans residues 103–117 (MVVMLASYFLISMFG). The Cytoplasmic portion of the chain corresponds to 136–188 (HASLRLRNLKNKLENKMEGIGLKRTPMGIVLDALEQQEEGINRLTDYISKVKE). The interval 136 to 188 (HASLRLRNLKNKLENKMEGIGLKRTPMGIVLDALEQQEEGINRLTDYISKVKE) is targeting to endoplasmic reticulum membrane.

Belongs to the PRA1 family. In terms of assembly, homodimer. Heterodimer with ARL6IP1. Forms multimers. Interacts with ARL6. Interacts with prenylated RAB1A and RAB3A. Interacts with SLC1A1/EAAC1. Interacts with RTN2 (via first transmembrane domain). Does not interact with VAMP1, VAMP2 or VAMP3.

It localises to the endoplasmic reticulum membrane. The protein resides in the cell membrane. The protein localises to the cytoplasm. It is found in the cytoskeleton. Regulates intracellular concentrations of taurine and glutamate. Negatively modulates SLC1A1/EAAC1 glutamate transport activity by decreasing its affinity for glutamate in a PKC activity-dependent manner. Plays a role in the retention of SLC1A1/EAAC1 in the endoplasmic reticulum. The polypeptide is PRA1 family protein 3 (ARL6IP5) (Macaca fascicularis (Crab-eating macaque)).